The sequence spans 115 residues: Evasin P1183 (115 aa).

An N-terminal signal peptide occupies residues 1–25 (MTRNWSFRVIFVSAMWCALLKFATL). Disulfide bonds link C38/C58, C54/C94, C70/C99, and C89/C108. Residues N45, N72, and N103 are each glycosylated (N-linked (GlcNAc...) asparagine).

The protein resides in the secreted. Its function is as follows. Salivary chemokine-binding protein which binds to host chemokine CCL2. The chain is Evasin P1183 from Amblyomma triste (Neotropical tick).